The following is a 434-amino-acid chain: Pre-B-cell leukemia transcription factor 3 (434 aa).

A disordered region spans residues Ser20–Gly41. Positions His32–Gly41 are enriched in basic and acidic residues. One can recognise a PBC domain in the interval Gly41–Asp234. Residues Asp48 to Gly127 are PBC-A. The interval Ala130–Asp234 is PBC-B. A DNA-binding region (homeobox; TALE-type) is located at residues Ala235–Ile297. Low complexity predominate over residues Asn326–Ser341. 2 disordered regions span residues Asn326–Asp349 and Ala405–Asn434. Positions Ala405 to Thr422 are enriched in polar residues.

It belongs to the TALE/PBX homeobox family. Interacts with PBXIP1.

The protein resides in the nucleus. Its function is as follows. Transcriptional activator that binds the sequence 5'-ATCAATCAA-3'. This chain is Pre-B-cell leukemia transcription factor 3 (Pbx3), found in Mus musculus (Mouse).